The sequence spans 366 residues: Galactoside alpha-(1,2)-fucosyltransferase 1 (366 aa).

Residues 1-8 (MWPLSHRH) are Cytoplasmic-facing. Residues 9 to 25 (LCLAFLLVCVLSAISFF) form a helical; Signal-anchor for type II membrane protein membrane-spanning segment. Topologically, residues 26–366 (LHIHQDSFRH…LSPLWTLAEP (341 aa)) are lumenal. Asparagine 66, asparagine 302, and asparagine 328 each carry an N-linked (GlcNAc...) asparagine glycan.

The protein belongs to the glycosyltransferase 11 family.

It is found in the golgi apparatus. The protein localises to the golgi stack membrane. The enzyme catalyses a beta-D-galactosyl-(1-&gt;4)-N-acetyl-beta-D-glucosaminyl derivative + GDP-beta-L-fucose = an alpha-L-Fuc-(1-&gt;2)-beta-D-Gal-(1-&gt;4)-beta-D-GlcNAc derivative + GDP + H(+). The catalysed reaction is a ganglioside GA1 + GDP-beta-L-fucose = a ganglioside Fuc-GA1 + GDP + H(+). It carries out the reaction a beta-D-Gal-(1-&gt;3)-beta-D-GlcNAc-(1-&gt;3)-beta-D-Gal-(1-&gt;4)-beta-D-Glc-(1&lt;-&gt;1')-Cer(d18:1(4E)) + GDP-beta-L-fucose = alpha-L-fucosyl-(1-&gt;2)- beta-D-galactosyl-(1-&gt;3)-N-acetyl-beta-D-glucosaminyl-(1-&gt;3)-beta-D-galactosyl-(1-&gt;4)-beta-D-glucosyl-(1&lt;-&gt;1')-N-acylsphing-4-enine + GDP + H(+). It catalyses the reaction a neolactoside nLc4Cer(d18:1(4E)) + GDP-beta-L-fucose = a neolactoside IV(2)-alpha-Fuc-nLc4Cer(d18:1(4E)) + GDP + H(+). The enzyme catalyses a ganglioside GM1 + GDP-beta-L-fucose = a ganglioside Fuc-GM1 + GDP + H(+). The catalysed reaction is beta-D-galactosyl-(1-&gt;3)-N-acetyl-D-galactosamine + GDP-beta-L-fucose = alpha-L-fucosyl-(1-&gt;2)-beta-D-galactosyl-(1-&gt;3)-N-acetyl-D-galactosamine + GDP + H(+). Its pathway is protein modification; protein glycosylation. Functionally, catalyzes the transfer of L-fucose, from a guanosine diphosphate-beta-L-fucose, to the terminal galactose residue of glycoconjugates through an alpha(1,2) linkage leading to H antigen synthesis that is an intermediate substrate in the synthesis of ABO blood group antigens. H antigen is essential for maturation of the glomerular layer of the main olfactory bulb, in cell migration and early cell-cell contacts during tumor associated angiogenesis. Preferentially fucosylates soluble lactose and to a lesser extent fucosylates glycolipids gangliosides GA1 and GM1a. The chain is Galactoside alpha-(1,2)-fucosyltransferase 1 from Plecturocebus brunneus (Brown titi monkey).